A 585-amino-acid polypeptide reads, in one-letter code: Cytoplasmic polyadenylation element-binding protein 1 (585 aa).

Residues 1–32 (MQHQLKACGDVKTSSRAQQNHRRSTAASAKRS) form a disordered region. RRM domains are found at residues 251–356 (RKVF…PWRL) and 373–444 (RTVF…HAET). The disordered stretch occupies residues 513-533 (DQTRILPRPPHHPAAHHSHQR). Basic residues predominate over residues 521-532 (PPHHPAAHHSHQ).

Interacts with fbf-1.

Cytoplasmic polyadenylation element binding protein that binds to and regulates the translation of specific mRNAs. Essential for progression through meiosis. Involved in spermatogenesis. This Caenorhabditis briggsae protein is Cytoplasmic polyadenylation element-binding protein 1 (cpb-1).